We begin with the raw amino-acid sequence, 165 residues long: Xanthine-guanine phosphoribosyltransferase (165 aa).

5-phospho-alpha-D-ribose 1-diphosphate is bound by residues 41 to 42 (RG) and 98 to 106 (DDLTDTGKT). Mg(2+) is bound at residue Asp99. Asp102 and Ile145 together coordinate guanine. Positions 102 and 145 each coordinate xanthine. GMP-binding positions include 102–106 (DTGKT) and 144–145 (WI).

This sequence belongs to the purine/pyrimidine phosphoribosyltransferase family. XGPT subfamily. Homotetramer. The cofactor is Mg(2+).

The protein localises to the cell inner membrane. The enzyme catalyses GMP + diphosphate = guanine + 5-phospho-alpha-D-ribose 1-diphosphate. The catalysed reaction is XMP + diphosphate = xanthine + 5-phospho-alpha-D-ribose 1-diphosphate. It catalyses the reaction IMP + diphosphate = hypoxanthine + 5-phospho-alpha-D-ribose 1-diphosphate. The protein operates within purine metabolism; GMP biosynthesis via salvage pathway; GMP from guanine: step 1/1. It functions in the pathway purine metabolism; XMP biosynthesis via salvage pathway; XMP from xanthine: step 1/1. Its function is as follows. Purine salvage pathway enzyme that catalyzes the transfer of the ribosyl-5-phosphate group from 5-phospho-alpha-D-ribose 1-diphosphate (PRPP) to the N9 position of the 6-oxopurines guanine and xanthine to form the corresponding ribonucleotides GMP (guanosine 5'-monophosphate) and XMP (xanthosine 5'-monophosphate), with the release of PPi. To a lesser extent, also acts on hypoxanthine. In Rhizobium meliloti (strain 1021) (Ensifer meliloti), this protein is Xanthine-guanine phosphoribosyltransferase.